The primary structure comprises 240 residues: Tetrahydromethanopterin S-methyltransferase subunit A (240 aa).

The Cytoplasmic segment spans residues 1 to 218 (MAEKREPAAG…KFHAGVHAGK (218 aa)). H85 is a 5-hydroxybenzimidazolylcob(I)amide binding site. A helical transmembrane segment spans residues 219–239 (FEGIMIGLAITLSLLGLILFG). Position 240 (R240) is a topological domain, extracellular.

It belongs to the MtrA family. In terms of assembly, the complex is composed of 8 subunits; MtrA, MtrB, MtrC, MtrD, MtrE, MtrF, MtrG and MtrH. The cofactor is 5-hydroxybenzimidazolylcob(I)amide.

It localises to the cell membrane. The catalysed reaction is 5-methyl-5,6,7,8-tetrahydromethanopterin + coenzyme M + 2 Na(+)(in) = 5,6,7,8-tetrahydromethanopterin + methyl-coenzyme M + 2 Na(+)(out). Its pathway is one-carbon metabolism; methanogenesis from CO(2); methyl-coenzyme M from 5,10-methylene-5,6,7,8-tetrahydromethanopterin: step 2/2. Functionally, part of a complex that catalyzes the formation of methyl-coenzyme M and tetrahydromethanopterin from coenzyme M and methyl-tetrahydromethanopterin. This is an energy-conserving, sodium-ion translocating step. The protein is Tetrahydromethanopterin S-methyltransferase subunit A of Methanohalophilus mahii (strain ATCC 35705 / DSM 5219 / SLP).